Consider the following 177-residue polypeptide: MSRVGKMLVAVPQGVDVSINEDLISVKGSLGTLLRPAHRLVKVQNEAGKLSFTPLDESAEANAMSGTMRALVANMVNGVSKGFQKKLSLVGVGYRAQAQGQKLNLQIGFSHPVVKEMPEGIKVECPTQTEILIKGADRQVVGQLAAEVRAFRPPEPYKGKGIRYSDEKVAIKETKKK.

It belongs to the universal ribosomal protein uL6 family. As to quaternary structure, part of the 50S ribosomal subunit.

Functionally, this protein binds to the 23S rRNA, and is important in its secondary structure. It is located near the subunit interface in the base of the L7/L12 stalk, and near the tRNA binding site of the peptidyltransferase center. The protein is Large ribosomal subunit protein uL6 of Leptothrix cholodnii (strain ATCC 51168 / LMG 8142 / SP-6) (Leptothrix discophora (strain SP-6)).